Reading from the N-terminus, the 233-residue chain is Large ribosomal subunit protein uL1 (233 aa).

This sequence belongs to the universal ribosomal protein uL1 family. As to quaternary structure, part of the 50S ribosomal subunit.

Its function is as follows. Binds directly to 23S rRNA. The L1 stalk is quite mobile in the ribosome, and is involved in E site tRNA release. Functionally, protein L1 is also a translational repressor protein, it controls the translation of the L11 operon by binding to its mRNA. The sequence is that of Large ribosomal subunit protein uL1 from Syntrophomonas wolfei subsp. wolfei (strain DSM 2245B / Goettingen).